Here is a 608-residue protein sequence, read N- to C-terminus: ATP-citrate synthase beta chain protein 1 (608 aa).

Residues 214–234 and 265–291 contribute to the ATP site; these read ILRF…ELGG and FKSE…KNQA. E231 provides a ligand contact to Mg(2+). H273 functions as the Tele-phosphohistidine intermediate in the catalytic mechanism. 292-302 contributes to the CoA binding site; that stretch reads LQDAGATVPTS.

The protein belongs to the succinate/malate CoA ligase alpha subunit family. As to quaternary structure, heterooctamer of 4 alpha and 4 beta chains.

Its subcellular location is the cytoplasm. The protein localises to the cytosol. The enzyme catalyses oxaloacetate + acetyl-CoA + ADP + phosphate = citrate + ATP + CoA. In terms of biological role, ATP citrate-lyase is the primary enzyme responsible for the synthesis of cytosolic acetyl-CoA, used for the elongation of fatty acids and biosynthesis of isoprenoids, flavonoids and malonated derivatives. May supply substrate to the cytosolic acetyl-CoA carboxylase, which generates the malonyl-CoA used for the synthesis of a multitude of compounds, including very long chain fatty acids and flavonoids. Required for normal growth and development and elongation of C18 fatty acids to C20 to C24 fatty acids in seeds. In contrast to all known animal ACL enzymes having a homomeric structure, plant ACLs are composed of alpha and beta chains. This Arabidopsis thaliana (Mouse-ear cress) protein is ATP-citrate synthase beta chain protein 1 (ACLB-1).